Consider the following 437-residue polypeptide: Aspartic proteinase CDR1 (437 aa).

The N-terminal stretch at 1–25 is a signal peptide; it reads MASLFSSVLLSLCLLSSLFLSNANA. A propeptide spans 26–73 (activation peptide); it reads KPKLGFTADLIHRDSPKSPFYNPMETSSQRLRNAIHRSVNRVFHFTEK. The region spanning 90–430 is the Peptidase A1 domain; that stretch reads YLMNVSIGTP…DTVSKTVSFK (341 aa). The N-linked (GlcNAc...) asparagine glycan is linked to Asn-93. Residues Asp-108 and Asp-319 contribute to the active site.

Belongs to the peptidase A1 family.

It is found in the secreted. It localises to the extracellular space. Its subcellular location is the apoplast. In terms of biological role, involved in salicylic acid-dependent inducible resistance responses. May release an endogenous peptide elicitor required for the activation of inducible resistance mechanisms. Possesses protease activity in vitro. The polypeptide is Aspartic proteinase CDR1 (CDR1) (Arabidopsis thaliana (Mouse-ear cress)).